The sequence spans 215 residues: Large ribosomal subunit protein uL3 (215 aa).

Gln151 carries the N5-methylglutamine modification.

This sequence belongs to the universal ribosomal protein uL3 family. In terms of assembly, part of the 50S ribosomal subunit. Forms a cluster with proteins L14 and L19. Post-translationally, methylated by PrmB.

One of the primary rRNA binding proteins, it binds directly near the 3'-end of the 23S rRNA, where it nucleates assembly of the 50S subunit. The chain is Large ribosomal subunit protein uL3 from Rickettsia massiliae (strain Mtu5).